Reading from the N-terminus, the 151-residue chain is Deoxyuridine 5'-triphosphate nucleotidohydrolase (151 aa).

Substrate is bound by residues 70 to 72 (RSG), Asn83, 87 to 89 (LID), and Met97.

This sequence belongs to the dUTPase family. It depends on Mg(2+) as a cofactor.

It carries out the reaction dUTP + H2O = dUMP + diphosphate + H(+). The protein operates within pyrimidine metabolism; dUMP biosynthesis; dUMP from dCTP (dUTP route): step 2/2. This enzyme is involved in nucleotide metabolism: it produces dUMP, the immediate precursor of thymidine nucleotides and it decreases the intracellular concentration of dUTP so that uracil cannot be incorporated into DNA. In Ectopseudomonas mendocina (strain ymp) (Pseudomonas mendocina), this protein is Deoxyuridine 5'-triphosphate nucleotidohydrolase.